We begin with the raw amino-acid sequence, 193 residues long: nitroreductase FRM2 (193 aa).

The protein belongs to the nitroreductase family. FMN is required as a cofactor.

The protein localises to the cytoplasm. The protein resides in the nucleus. The catalysed reaction is 4-(hydroxyamino)quinoline N-oxide + 2 NAD(+) + H2O = 4-nitroquinoline N-oxide + 2 NADH + 2 H(+). Its function is as follows. Type II nitroreductase, able to reduce 4-nitroquinoline N-oxide (4-NQO) into 4-aminoquinoline-N-oxide (4-AQO) via 4-hydroxyaminoquinoline (4-HAQO), using NADH as reductant. involved in the oxidative stress response. Plays a possible role in the metal stress response. Involved in negative regulation of fatty acid metabolism. This is nitroreductase FRM2 from Saccharomyces cerevisiae (strain ATCC 204508 / S288c) (Baker's yeast).